The following is a 447-amino-acid chain: RNA-binding protein 208 (447 aa).

2 consecutive RRM domains span residues 73–147 and 158–236; these read RSVY…WAYA and FHIF…WATK. The span at 254–269 shows a compositional bias: polar residues; it reads TNGSSSNPGMEASQDT. Disordered stretches follow at residues 254–279 and 353–372; these read TNGS…ENNP and WGNK…PPLP. Residues 282-356 enclose the RRM 3 domain; it reads TTVYVGNLGH…KPIKCSWGNK (75 aa).

In terms of assembly, interacts with RBP-P.

RNA-binding protein. This chain is RNA-binding protein 208, found in Oryza sativa subsp. japonica (Rice).